Reading from the N-terminus, the 245-residue chain is tRNA pseudouridine synthase A (245 aa).

The Nucleophile role is filled by Asp-52. Tyr-111 is a substrate binding site.

Belongs to the tRNA pseudouridine synthase TruA family. In terms of assembly, homodimer.

It catalyses the reaction uridine(38/39/40) in tRNA = pseudouridine(38/39/40) in tRNA. Functionally, formation of pseudouridine at positions 38, 39 and 40 in the anticodon stem and loop of transfer RNAs. The sequence is that of tRNA pseudouridine synthase A from Ehrlichia chaffeensis (strain ATCC CRL-10679 / Arkansas).